A 132-amino-acid polypeptide reads, in one-letter code: MAGTFTLRVVSPEGNVLKEEAEFVVLPGGNGEIGILPNHAPLISSIEIGVIRYTVNGKVEKIATSGGFVEVSDNKVTILADTAEPGEKVDLDRALAAKERAEKRLTQREGIDVRRAELALMRAVARINAARN.

The protein belongs to the ATPase epsilon chain family. As to quaternary structure, F-type ATPases have 2 components, CF(1) - the catalytic core - and CF(0) - the membrane proton channel. CF(1) has five subunits: alpha(3), beta(3), gamma(1), delta(1), epsilon(1). CF(0) has three main subunits: a, b and c.

The protein localises to the cell membrane. Its function is as follows. Produces ATP from ADP in the presence of a proton gradient across the membrane. The polypeptide is ATP synthase epsilon chain (Desulfitobacterium hafniense (strain Y51)).